We begin with the raw amino-acid sequence, 356 residues long: 3-dehydroquinate synthase (356 aa).

Residues 69-74, 103-107, 127-128, K140, K149, and 167-170 contribute to the NAD(+) site; these read DGEKFK, GVIGD, TT, and CLKT. Zn(2+)-binding residues include E182, H245, and H262.

It belongs to the sugar phosphate cyclases superfamily. Dehydroquinate synthase family. It depends on Co(2+) as a cofactor. Zn(2+) serves as cofactor. Requires NAD(+) as cofactor.

The protein localises to the cytoplasm. The enzyme catalyses 7-phospho-2-dehydro-3-deoxy-D-arabino-heptonate = 3-dehydroquinate + phosphate. It participates in metabolic intermediate biosynthesis; chorismate biosynthesis; chorismate from D-erythrose 4-phosphate and phosphoenolpyruvate: step 2/7. Catalyzes the conversion of 3-deoxy-D-arabino-heptulosonate 7-phosphate (DAHP) to dehydroquinate (DHQ). This is 3-dehydroquinate synthase from Psychromonas ingrahamii (strain DSM 17664 / CCUG 51855 / 37).